The following is a 386-amino-acid chain: Latent membrane protein 1 (386 aa).

Over 2-23 (DLDLERGPPGPRRPPRGPPLSS) the chain is Cytoplasmic. The helical transmembrane segment at 24 to 44 (SIGLALLLLLLALLFWLYIIM) threads the bilayer. The Extracellular segment spans residues 45–51 (SNWTGGA). The chain crosses the membrane as a helical span at residues 52 to 72 (LLVLYAFALMLVIIILIIFIF). Residues 73-75 (RRD) lie on the Cytoplasmic side of the membrane. The helical transmembrane segment at 76–96 (LLCPLGALCLLLLMITLLLIA) threads the bilayer. Residues 97–106 (LWNLHGQALY) are Extracellular-facing. Residues 107 to 127 (LGIVLFIFGCLLVLGLWIYLL) traverse the membrane as a helical segment. The Cytoplasmic segment spans residues 128 to 139 (EILWRLGATIWQ). Residues 140 to 160 (LLAFFLAFFLDIILLIIALYL) traverse the membrane as a helical segment. Residues 161–163 (QQN) lie on the Extracellular side of the membrane. The chain crosses the membrane as a helical span at residues 164-184 (WWTLLVDLLWLLLFLAILIWM). Residues 185–386 (YYHGQRHSDE…HGPVQLSYYD (202 aa)) are Cytoplasmic-facing. Residues 194–232 (EHHHDDSLPHPQQATDDSSNQSDSNSNEGRHLLLVSGAG) form a CTAR1 region. The tract at residues 194 to 386 (EHHHDDSLPH…HGPVQLSYYD (193 aa)) is disordered. Composition is skewed to low complexity over residues 209 to 220 (DDSSNQSDSNSN) and 251 to 267 (NGPQ…PQDP). Residues 342–386 (GGGGHSHDSGHDGIDPHLPTLLLGTSGSGGDDDDPHGPVQLSYYD) form a CTAR2 region. A compositionally biased stretch (basic and acidic residues) spans 346-356 (HSHDSGHDGID). The segment covering 357–366 (PHLPTLLLGT) has biased composition (low complexity).

The protein belongs to the herpesviridae LMP-1 family. In terms of assembly, interacts (via PXQXT motif) with host tumor necrosis factor receptor-associated factor (TRAF) proteins TRAF1, TRAF2, TRAF3 and TRAF5. Interacts with TRAF3; this interaction activates B lymphocytes. Interacts with human protein ZMYND11; leading to negatively regulate NF-kappa-B activation. Interacts with host UBE2I; this interaction induces the sumoylation of various cellular proteins. Interacts with host IRF7. Interacts with host TYK2. Ubiquitinated on the N-terminus.

It localises to the host cell membrane. Functionally, acts as a CD40 functional homolog to prevent apoptosis of infected B-lymphocytes and drive their proliferation. Functions as a constitutively active tumor necrosis factor receptor that induces the activation of several signaling pathways, including those of the NF-kappa-B family. LMP1 signaling leads to up-regulation of antiapoptotic proteins and provide growth signals in latently infected cells. Interacts with host UBE2I and subsequently affects the sumoylation state of several cellular proteins. For example, induces the sumoylation of host IRF7 thereby limiting its transcriptional activity and modulating the activation of innate immune responses. Also inhibits host IFN-alpha-stimulated STAT2 nuclear translocation and interferon-stimulated response element transcriptional activity by interacting with and inhibiting host TYK2. Induces SUMO expression during viral latency thereby dysregulating the host sumoylation processes. This is Latent membrane protein 1 (LMP1) from Homo sapiens (Human).